Consider the following 1093-residue polypeptide: Electroneutral sodium bicarbonate exchanger 1 (1093 aa).

Disordered regions lie at residues 1-25 and 55-95; these read MPAA…AVVD and PLGR…HDTP. Topologically, residues 1-478 are extracellular; that stretch reads MPAAGSNEPD…DYRDALSLQC (478 aa). Basic residues predominate over residues 59-77; that stretch reads QSHRHHRTHGQKHRRRGRG. The Zn(2+) site is built by Phe167 and Leu169. The VTVLP; mediates dimerization signature appears at 340 to 344; that stretch reads LFILL. A helical membrane pass occupies residues 479–499; that stretch reads LASFLFLYCACMSPVITFGGL. Over 500–523 the chain is Cytoplasmic; the sequence is LGEATEGRISAIESLFGASMTGIA. A helical membrane pass occupies residues 524–544; the sequence is YSLFAGQALTILGSTGPVLVF. Residues 545–565 are Extracellular-facing; sequence EKILFKFCKDYALSYLSLRAC. The helical transmembrane segment at 566 to 586 threads the bilayer; the sequence is IGLWTAFLCIVLVATDASSLV. Over 587–595 the chain is Cytoplasmic; sequence CYITRFTEE. A helical transmembrane segment spans residues 596 to 616; it reads AFASLICIIFIYEAIEKLIHL. Residues 617 to 687 are Extracellular-facing; that stretch reads AETYPIHMHS…EFMGSACGHH (71 aa). 2 disulfide bridges follow: Cys636–Cys684 and Cys638–Cys672. Residue Asn646 is glycosylated (N-linked (GlcNAc) asparagine). A helical membrane pass occupies residues 688–708; the sequence is GPYTPDVLFWSCILFFTTFIL. Residues 709–731 lie on the Cytoplasmic side of the membrane; the sequence is SSTLKTFKTSRYFPTRVRSMVSD. Residues 732 to 752 traverse the membrane as a helical segment; the sequence is FAVFLTIFTMVIIDFLIGVPS. The Extracellular segment spans residues 753–778; sequence PKLQVPSVFKPTRDDRGWIINPIGPN. Residues 779-799 form a helical membrane-spanning segment; it reads PWWTVIAAIIPALLCTILIFM. At 800–824 the chain is on the cytoplasmic side; it reads DQQITAVIINRKEHKLKKGCGYHLD. A helical transmembrane segment spans residues 825-845; it reads LLMVAIMLGVCSIMGLPWFVA. The Extracellular portion of the chain corresponds to 846-881; the sequence is ATVLSITHVNSLKLESECSAPGEQPKFLGIREQRVT. Residues 882–902 traverse the membrane as a helical segment; sequence GLMIFVLMGCSVFMTAILKFI. The Cytoplasmic segment spans residues 903 to 904; it reads PM. A helical transmembrane segment spans residues 905-925; the sequence is PVLYGVFLYMGVSSLQGIQFF. Residues 926–962 are Extracellular-facing; it reads DRLKLFGMPAKHQPDFIYLRHVPLRKVHLFTLIQLTC. Residues 963–983 traverse the membrane as a helical segment; that stretch reads LVLLWVIKASPAAIVFPMMVL. The Cytoplasmic portion of the chain corresponds to 984–1093; it reads ALVFVRKVMD…GNAKEKSLFN (110 aa). Residues 1010-1036 are a coiled coil; that stretch reads ESKKKKLDDAKKKAKEEEEAEKMLEIG.

It belongs to the anion exchanger (TC 2.A.31) family. Homodimer. As to expression, expressed in the pyramidal cells of the hippocampus (at protein level). Highly expressed in all major regions of the brain, spinal column and in testis, and moderate levels in trachea, thyroid and medulla region of kidney. Low expression levels observed in pancreas and kidney cortex. Expressed in the brain. In terms of tissue distribution, expressed in the brain, heart and kidney.

The protein localises to the apical cell membrane. It is found in the basolateral cell membrane. It localises to the cytoplasmic vesicle. The protein resides in the secretory vesicle. Its subcellular location is the synaptic vesicle membrane. The protein localises to the cell membrane. It carries out the reaction 2 hydrogencarbonate(out) + chloride(in) + Na(+)(out) = 2 hydrogencarbonate(in) + chloride(out) + Na(+)(in). Activity is inhibited by 4,4'-Di-isothiocyanatostilbene-2,2'-disulfonic acid (DIDS - an inhibitor of several anion channels and transporters). With respect to regulation, activity is inhibited by 4,4'-Di-isothiocyanatostilbene-2,2'-disulfonic acid (DIDS - an inhibitor of several anion channels and transporters). Zinc-binding negatively regulates its activity. Its function is as follows. Mediates electroneutral sodium- and carbonate-dependent chloride-HCO3(-) exchange with a Na(+):HCO3(-) stoichiometry of 2:1. Plays a major role in pH regulation in neurons. Mediates sodium reabsorption in the renal cortical collecting ducts. The sequence is that of Electroneutral sodium bicarbonate exchanger 1 from Homo sapiens (Human).